A 152-amino-acid chain; its full sequence is NADH-quinone oxidoreductase subunit A 2 (152 aa).

3 helical membrane passes run 8–28, 63–83, and 90–110; these read FGKV…GYVS, FYVV…LFPW, and LGGF…LGLV.

The protein belongs to the complex I subunit 3 family. NDH-1 is composed of 14 different subunits. Subunits NuoA, H, J, K, L, M, N constitute the membrane sector of the complex.

The protein localises to the cell inner membrane. It carries out the reaction a quinone + NADH + 5 H(+)(in) = a quinol + NAD(+) + 4 H(+)(out). Its function is as follows. NDH-1 shuttles electrons from NADH, via FMN and iron-sulfur (Fe-S) centers, to quinones in the respiratory chain. The immediate electron acceptor for the enzyme in this species is believed to be a menaquinone. Couples the redox reaction to proton translocation (for every two electrons transferred, four hydrogen ions are translocated across the cytoplasmic membrane), and thus conserves the redox energy in a proton gradient. The polypeptide is NADH-quinone oxidoreductase subunit A 2 (Chloroherpeton thalassium (strain ATCC 35110 / GB-78)).